The primary structure comprises 258 residues: Snake venom serine protease PA (258 aa).

Residues 1-18 form the signal peptide; sequence MVLIRVLANLLILQLSYA. Residues 19 to 24 constitute a propeptide that is removed on maturation; it reads QKSPEL. Residues 25–249 form the Peptidase S1 domain; the sequence is VVGGDECNIN…YNDWIKSIIA (225 aa). 6 cysteine pairs are disulfide-bonded: cysteine 31-cysteine 163, cysteine 50-cysteine 66, cysteine 98-cysteine 256, cysteine 142-cysteine 210, cysteine 174-cysteine 189, and cysteine 200-cysteine 225. N-linked (GlcNAc...) asparagine glycosylation occurs at asparagine 44. Catalysis depends on charge relay system residues histidine 65 and aspartate 110. The active-site Charge relay system is the serine 204.

It belongs to the peptidase S1 family. Snake venom subfamily. As to quaternary structure, monomer. Expressed by the venom gland.

The protein localises to the secreted. Functionally, snake venom serine protease that may act in the hemostasis system of the prey. This Trimeresurus stejnegeri (Chinese green tree viper) protein is Snake venom serine protease PA.